The sequence spans 371 residues: MIENPIKRRPTRKIRVGSVYVGGDAPISIQSMTNTETCDVDATVAQIQRCADAGVDIMRVSVPSMEAAEAFGKIRQRVSVPLVADIHFDHRIALAVADYGADCLRINPGNIGSDQKVREVVAAARHHGISIRIGVNAGSLEKDLQKKYGEPTGAALLESAMRHIDILDRLDFHEFKVSVKASNVFLTMDAYRLLSQQIDNPLHLGVTEAGIYRTGTVKSAIALGGLLMEGIGDTMRISLAAEPEDEVKIGFDILKSLGLRSNGINFIACPSCSRQEFNVIKVMQALEERLEDIRTPMDLSVIGCKVNGPGEAKEADIGIVGASPRSLVYRNGEKSHLIDTDQLVDEIEDMVRQRVKEIEEAKSKEIIRSSS.

Positions 269, 272, 304, and 311 each coordinate [4Fe-4S] cluster.

Belongs to the IspG family. [4Fe-4S] cluster is required as a cofactor.

The catalysed reaction is (2E)-4-hydroxy-3-methylbut-2-enyl diphosphate + oxidized [flavodoxin] + H2O + 2 H(+) = 2-C-methyl-D-erythritol 2,4-cyclic diphosphate + reduced [flavodoxin]. It participates in isoprenoid biosynthesis; isopentenyl diphosphate biosynthesis via DXP pathway; isopentenyl diphosphate from 1-deoxy-D-xylulose 5-phosphate: step 5/6. Its function is as follows. Converts 2C-methyl-D-erythritol 2,4-cyclodiphosphate (ME-2,4cPP) into 1-hydroxy-2-methyl-2-(E)-butenyl 4-diphosphate. The protein is 4-hydroxy-3-methylbut-2-en-1-yl diphosphate synthase (flavodoxin) of Acinetobacter baylyi (strain ATCC 33305 / BD413 / ADP1).